The following is a 441-amino-acid chain: Protein MPE1 (441 aa).

The region spanning 5 to 78 (IFYRFKSQRN…STSVIVKRSP (74 aa)) is the DWNN domain. The CCHC-type zinc-finger motif lies at 180 to 197 (YMCYRCGGRDHWIKNCPT). Serine 221 bears the Phosphoserine mark. Residues 355-364 (KKQEELHGSS) show a composition bias toward basic and acidic residues. Positions 355–400 (KKQEELHGSSKDGNQPETKKMKLMDPTGTAGLNNNTSLPTSVNNGG) are disordered. Residues 384-400 (AGLNNNTSLPTSVNNGG) show a composition bias toward polar residues.

As to quaternary structure, component of the cleavage and polyadenylation factor (CPF) complex, which is composed of PTI1, SYC1, SSU72, GLC7, MPE1, REF2, PFS2, PTA1, YSH1/BRR5, SWD2, CFT2/YDH1, YTH1, CFT1/YHH1, FIP1 and PAP1.

It is found in the nucleus. Its function is as follows. Component of the cleavage and polyadenylation factor (CPF) complex, which plays a key role in polyadenylation-dependent pre-mRNA 3'-end formation and cooperates with cleavage factors including the CFIA complex and NAB4/CFIB. In Saccharomyces cerevisiae (strain ATCC 204508 / S288c) (Baker's yeast), this protein is Protein MPE1 (MPE1).